A 398-amino-acid polypeptide reads, in one-letter code: Secreted aspartic protease 2 (398 aa).

The signal sequence occupies residues 1–18 (MFLKNIFIALAIALLVDA). Residues 19-56 (TPTTTKRSAGFVALDFSVVKTPKAFPVTNGQEGKTSKR) constitute a propeptide, activation peptide. The Peptidase A1 domain occupies 70 to 384 (YAADITVGSN…DLDDNEISLA (315 aa)). Asp-88 is an active-site residue. 88–90 (DTG) contributes to the pepstatin A binding site. An intrachain disulfide couples Cys-103 to Cys-115. 141-142 (GD) serves as a coordination point for pepstatin A. Zn(2+)-binding residues include Asp-247 and Asp-270. Residue Asp-274 is part of the active site. 274–278 (DSGTT) serves as a coordination point for pepstatin A. Cys-312 and Cys-350 form a disulfide bridge. Residues Asn-313 and Asn-321 are each glycosylated (N-linked (GlcNAc...) asparagine).

The protein belongs to the peptidase A1 family. Monomer.

It is found in the secreted. The enzyme catalyses Preferential cleavage at the carboxyl of hydrophobic amino acids, but fails to cleave 15-Leu-|-Tyr-16, 16-Tyr-|-Leu-17 and 24-Phe-|-Phe-25 of insulin B chain. Activates trypsinogen, and degrades keratin.. Secreted aspartic peptidases (SAPs) are a group of ten acidic hydrolases considered as key virulence factors. These enzymes supply the fungus with nutrient amino acids as well as are able to degrade the selected host's proteins involved in the immune defense. Induces host inflammatory cytokine production in a proteolytic activity-independent way. Plays a role in tissue damage during superficial infection. Moreover, acts toward human hemoglobin though limited proteolysis to generate a variety of antimicrobial hemocidins, enabling to compete with the other microorganisms of the same physiological niche using the microbicidal peptides generated from the host protein. Its function is as follows. Plays a key role in defense against host by cleaving histatin-5 (Hst 5), a peptide from human saliva that carries out fungicidal activity. The cleavage rate decreases in an order of SAP2 &gt; SAP9 &gt; SAP3 &gt; SAP7 &gt; SAP4 &gt; SAP1 &gt; SAP8. The first cleavage occurs between residues 'Lys-17' and 'His-18' of Hst 5, giving DSHAKRHHGYKRKFHEK and HHSHRGY peptides. Simultaneously, the DSHAKRHHGYKRK peptide is also formed. Further fragmentation by SAP2 results in FHEK and DSHAKRHHGY products. The sequence is that of Secreted aspartic protease 2 from Candida albicans (strain SC5314 / ATCC MYA-2876) (Yeast).